Consider the following 285-residue polypeptide: 4-hydroxybenzoate octaprenyltransferase (285 aa).

The next 7 membrane-spanning stretches (helical) occupy residues 17–37 (PVGI…AGAG), 41–61 (PKVL…GCVI), 92–112 (LLLF…LNPL), 135–155 (HWPQ…AFAA), 158–178 (GTVP…ATVY), 216–236 (ALLL…YYYL), and 263–283 (AFLN…LHYL).

Belongs to the UbiA prenyltransferase family. It depends on Mg(2+) as a cofactor.

It is found in the cell inner membrane. It catalyses the reaction all-trans-octaprenyl diphosphate + 4-hydroxybenzoate = 4-hydroxy-3-(all-trans-octaprenyl)benzoate + diphosphate. The protein operates within cofactor biosynthesis; ubiquinone biosynthesis. In terms of biological role, catalyzes the prenylation of para-hydroxybenzoate (PHB) with an all-trans polyprenyl group. Mediates the second step in the final reaction sequence of ubiquinone-8 (UQ-8) biosynthesis, which is the condensation of the polyisoprenoid side chain with PHB, generating the first membrane-bound Q intermediate 3-octaprenyl-4-hydroxybenzoate. This is 4-hydroxybenzoate octaprenyltransferase from Nitrosococcus oceani (strain ATCC 19707 / BCRC 17464 / JCM 30415 / NCIMB 11848 / C-107).